Here is a 316-residue protein sequence, read N- to C-terminus: Secondary metabolism regulator LAE1 (316 aa).

The protein belongs to the methyltransferase superfamily. LaeA methyltransferase family. In terms of assembly, component of the heterotrimeric velvet complex composed of LAE1, VEL1 and VEL2; VEL1 acting as a bridging protein between LAE1 and VEL2. Interacts with VEL1.

It localises to the nucleus. It carries out the reaction L-methionyl-[protein] + S-adenosyl-L-methionine = S-methyl-L-methionyl-[protein] + S-adenosyl-L-homocysteine. In terms of biological role, methyltransferase that performs automethylation. No other methyl-accepting substrate has been identified yet. Component of the velvet transcription factor complex that acts as a global regulator for secondary metabolite gene expression. Controls the expression of the gibberellins gene clusters, but does not affect bikaverin production. Controls the expression of the fusaric acid gene cluster. Acts as a virulence factors during infection, most likely through activation of gibberellins biosynthesis. The protein is Secondary metabolism regulator LAE1 of Gibberella fujikuroi (strain CBS 195.34 / IMI 58289 / NRRL A-6831) (Bakanae and foot rot disease fungus).